Here is a 354-residue protein sequence, read N- to C-terminus: Biotin synthase (354 aa).

Positions 64–282 (GDVELATLLS…IAVARITMPR (219 aa)) constitute a Radical SAM core domain. [4Fe-4S] cluster contacts are provided by Cys-79, Cys-83, and Cys-86. [2Fe-2S] cluster contacts are provided by Cys-123, Cys-154, Cys-214, and Arg-286.

Belongs to the radical SAM superfamily. Biotin synthase family. As to quaternary structure, homodimer. The cofactor is [4Fe-4S] cluster. [2Fe-2S] cluster is required as a cofactor.

It carries out the reaction (4R,5S)-dethiobiotin + (sulfur carrier)-SH + 2 reduced [2Fe-2S]-[ferredoxin] + 2 S-adenosyl-L-methionine = (sulfur carrier)-H + biotin + 2 5'-deoxyadenosine + 2 L-methionine + 2 oxidized [2Fe-2S]-[ferredoxin]. It functions in the pathway cofactor biosynthesis; biotin biosynthesis; biotin from 7,8-diaminononanoate: step 2/2. Its function is as follows. Catalyzes the conversion of dethiobiotin (DTB) to biotin by the insertion of a sulfur atom into dethiobiotin via a radical-based mechanism. This is Biotin synthase from Paracidovorax citrulli (strain AAC00-1) (Acidovorax citrulli).